A 386-amino-acid chain; its full sequence is 3-hydroxyisobutyryl-CoA hydrolase, mitochondrial (386 aa).

The N-terminal 32 residues, 1-32 (MGLQGLCRLMSRFNSYKRTNIILQHLKMSNHT), are a transit peptide targeting the mitochondrion. Position 92 is an N6-acetyllysine; alternate (lysine 92). Lysine 92 carries the N6-succinyllysine; alternate modification. Residues glutamate 121, glycine 146, glutamate 169, and aspartate 177 each coordinate substrate. Lysine 221 carries the post-translational modification N6-acetyllysine; alternate. At lysine 221 the chain carries N6-succinyllysine; alternate. Position 234 is a phosphoserine (serine 234). An N6-succinyllysine mark is found at lysine 250 and lysine 257. The residue at position 297 (lysine 297) is an N6-acetyllysine; alternate. Position 297 is an N6-succinyllysine; alternate (lysine 297). An N6-succinyllysine modification is found at lysine 301. Lysine 353 bears the N6-acetyllysine; alternate mark. Position 353 is an N6-succinyllysine; alternate (lysine 353). Serine 356 is modified (phosphoserine). An N6-acetyllysine mark is found at lysine 360 and lysine 365. Lysine 377 is modified (N6-succinyllysine).

The protein belongs to the enoyl-CoA hydratase/isomerase family.

It is found in the mitochondrion. It carries out the reaction 3-hydroxy-2-methylpropanoyl-CoA + H2O = 3-hydroxy-2-methylpropanoate + CoA + H(+). It participates in amino-acid degradation; L-valine degradation. Its function is as follows. Hydrolyzes 3-hydroxyisobutyryl-CoA (HIBYL-CoA), a saline catabolite. Has high activity toward isobutyryl-CoA. Could be an isobutyryl-CoA dehydrogenase that functions in valine catabolism. Also hydrolyzes 3-hydroxypropanoyl-CoA. The protein is 3-hydroxyisobutyryl-CoA hydrolase, mitochondrial (HIBCH) of Bos taurus (Bovine).